Consider the following 120-residue polypeptide: MKILFVLISILYAVYCFSSEEDVDSAYLANELEPVEDINSEQYAALEPKEEQERSCAGMGRDCKDDCDCCLNIATCNCWFGRYFCSCTFGDYQTCLRKKGKCKRNRPQSCPRSNLNRKKG.

A signal peptide spans 1–16 (MKILFVLISILYAVYC). Positions 17–54 (FSSEEDVDSAYLANELEPVEDINSEQYAALEPKEEQER) are excised as a propeptide. 4 disulfides stabilise this stretch: Cys56–Cys70, Cys63–Cys76, Cys69–Cys87, and Cys78–Cys85. In terms of domain architecture, Agouti spans 56 to 95 (CAGMGRDCKDDCDCCLNIATCNCWFGRYFCSCTFGDYQTC).

This sequence belongs to the neurotoxin 05 (agouti) family. In terms of processing, contains 6 disulfide bonds. As to expression, expressed by the venom gland.

The protein localises to the secreted. The polypeptide is U13-lycotoxin-Ls1e (Lycosa singoriensis (Wolf spider)).